Here is a 520-residue protein sequence, read N- to C-terminus: Amine oxidase [flavin-containing] B (520 aa).

Over 1-489 the chain is Cytoplasmic; sequence MNSKCDVVVV…TFLERHLPSV (489 aa). K52 bears the N6-acetyllysine mark. An S-8alpha-FAD cysteine modification is found at C397. A helical; Anchor for type IV membrane protein transmembrane segment spans residues 490-516; the sequence is PGLLRLIRLTTVVSAVALGFLAQKRGL. The Mitochondrial intermembrane portion of the chain corresponds to 517–520; it reads LLRI.

Belongs to the flavin monoamine oxidase family. In terms of assembly, monomer, homo- or heterodimer (containing two subunits of similar size). Each subunit contains a covalently bound flavin. Enzymatically active as monomer. The cofactor is FAD.

The protein resides in the mitochondrion outer membrane. The catalysed reaction is a secondary aliphatic amine + O2 + H2O = a primary amine + an aldehyde + H2O2. The enzyme catalyses (R)-adrenaline + O2 + H2O = (R)-3,4-dihydroxymandelaldehyde + methylamine + H2O2. It catalyses the reaction a primary methyl amine + O2 + H2O = an aldehyde + H2O2 + NH4(+). It carries out the reaction benzylamine + O2 + H2O = benzaldehyde + H2O2 + NH4(+). The catalysed reaction is dopamine + O2 + H2O = 3,4-dihydroxyphenylacetaldehyde + H2O2 + NH4(+). The enzyme catalyses tyramine + O2 + H2O = (4-hydroxyphenyl)acetaldehyde + H2O2 + NH4(+). It catalyses the reaction (R)-noradrenaline + O2 + H2O = (R)-3,4-dihydroxymandelaldehyde + H2O2 + NH4(+). It carries out the reaction 2-phenylethylamine + O2 + H2O = 2-phenylacetaldehyde + H2O2 + NH4(+). The catalysed reaction is N-acetylputrescine + O2 + H2O = 4-acetamidobutanal + H2O2 + NH4(+). Its function is as follows. Catalyzes the oxidative deamination of primary and some secondary amines such as neurotransmitters, and exogenous amines including the tertiary amine, neurotoxin 1-methyl-4-phenyl-1,2,3,6-tetrahydropyridine (MPTP), with concomitant reduction of oxygen to hydrogen peroxide and participates in the metabolism of neuroactive and vasoactive amines in the central nervous system and peripheral tissues. Preferentially degrades benzylamine and phenylethylamine. The chain is Amine oxidase [flavin-containing] B from Cavia porcellus (Guinea pig).